The chain runs to 125 residues: Small ribosomal subunit protein bS6 (125 aa).

The interval 99–125 is disordered; that stretch reads PSIMMKSVEREEARKASTEASAPAQAQ. The segment covering 105 to 115 has biased composition (basic and acidic residues); that stretch reads SVEREEARKAS. The segment covering 116–125 has biased composition (polar residues); that stretch reads TEASAPAQAQ.

The protein belongs to the bacterial ribosomal protein bS6 family.

In terms of biological role, binds together with bS18 to 16S ribosomal RNA. In Bordetella petrii (strain ATCC BAA-461 / DSM 12804 / CCUG 43448), this protein is Small ribosomal subunit protein bS6.